We begin with the raw amino-acid sequence, 124 residues long: Cytoinsectotoxin-4 (124 aa).

An N-terminal signal peptide occupies residues 1–19; the sequence is MKCFILAAALVLAFACIAA. Residues 20–62 constitute a propeptide that is removed on maturation; sequence SEPAETENEDLDDLSDLEDEEWLDELEEAAEYLESLREFEESR. The residue at position 123 (Phe123) is a Phenylalanine amide.

It belongs to the cationic peptide 06 (cytoinsectotoxin) family. Expressed by the venom gland.

Its subcellular location is the secreted. Its function is as follows. Insecticidal and antimicrobial peptide. Has insecticidal activity against larvae of flesh fly S.carnaria. Has antibacterial activity against Gram-positive bacterium B.subtilis B-501 (MIC=2.5 uM) and Gram-negative bacterium E.coli DH5alpha (MIC=10 uM). This chain is Cytoinsectotoxin-4, found in Lachesana tarabaevi (Spider).